A 316-amino-acid chain; its full sequence is Lipoyl synthase (316 aa).

[4Fe-4S] cluster contacts are provided by cysteine 61, cysteine 66, cysteine 72, cysteine 87, cysteine 91, cysteine 94, and serine 301. A Radical SAM core domain is found at 73–290; that stretch reads FGKGTATFMI…ERAAIEMGFS (218 aa).

Belongs to the radical SAM superfamily. Lipoyl synthase family. [4Fe-4S] cluster is required as a cofactor.

It is found in the cytoplasm. The enzyme catalyses [[Fe-S] cluster scaffold protein carrying a second [4Fe-4S](2+) cluster] + N(6)-octanoyl-L-lysyl-[protein] + 2 oxidized [2Fe-2S]-[ferredoxin] + 2 S-adenosyl-L-methionine + 4 H(+) = [[Fe-S] cluster scaffold protein] + N(6)-[(R)-dihydrolipoyl]-L-lysyl-[protein] + 4 Fe(3+) + 2 hydrogen sulfide + 2 5'-deoxyadenosine + 2 L-methionine + 2 reduced [2Fe-2S]-[ferredoxin]. It participates in protein modification; protein lipoylation via endogenous pathway; protein N(6)-(lipoyl)lysine from octanoyl-[acyl-carrier-protein]: step 2/2. Its function is as follows. Catalyzes the radical-mediated insertion of two sulfur atoms into the C-6 and C-8 positions of the octanoyl moiety bound to the lipoyl domains of lipoate-dependent enzymes, thereby converting the octanoylated domains into lipoylated derivatives. The sequence is that of Lipoyl synthase from Nitrosospira multiformis (strain ATCC 25196 / NCIMB 11849 / C 71).